Consider the following 512-residue polypeptide: Acid-sensing ion channel 2 (512 aa).

At 1–37 (MDLKESPSEGSLQPSSIQIFANTSTLHGIRHIFVYGP) the chain is on the cytoplasmic side. Phosphoserine is present on residues Ser8 and Ser11. The helical transmembrane segment at 38 to 58 (LTIRRVLWAVAFVGSLGLLLV) threads the bilayer. Topologically, residues 59–427 (ESSERVSYYF…EQKKAYEVAA (369 aa)) are extracellular. 6 cysteine pairs are disulfide-bonded: Cys92–Cys193, Cys289–Cys364, Cys307–Cys360, Cys311–Cys358, Cys320–Cys342, and Cys322–Cys334. 2 N-linked (GlcNAc...) asparagine glycosylation sites follow: Asn365 and Asn392. The helical transmembrane segment at 428–448 (LLGDIGGQMGLFIGASLLTIL) threads the bilayer. Positions 441–443 (GAS) match the GAS motif; ion selectivity filter motif. Over 449-512 (ELFDYIYELI…ALGTLEEIAC (64 aa)) the chain is Cytoplasmic.

Belongs to the amiloride-sensitive sodium channel (TC 1.A.6) family. ASIC2 subfamily. As to quaternary structure, can form homotrimers. Heterotrimer; forms functional heterotrimers producing channel with different properties. Forms heterotrimers with ASIC1; while ASIC1 determines current amplitude, ASIC2 influences the properties of the current. Forms heterotrimers with ASIC3; resulting in channels with distinct properties. Interacts with STOM; STOM regulates the gating of ASIC2-containing channels. Interacts with PICK1; promotes ASIC3 phosphorylation by PKC and activation of ASIC2/ASIC3 heterotrimers. Expressed in sciatic nerve and dorsal root ganglion (DRG) (at protein level). Both isoforms display the same expression pattern except in DRG where isoform 2 is more abundantly expressed. Widely distributed throughout the brain. Highly expressed in the main olfactory bulb, neo- and allo-cortical regions, hippocampal formation, habenula, basolateral amygdaloid nuclei, and cerebellum. In the olfactory system, expressed in the glomerular cell layer, the internal granular layer, and the mitral and internal plexiform cell layers. Within the glomerular layer, restricted to the periglomerular cells. In the neocortex, strongly expressed in the large pyramidal neurons in all cortical layers as well as in the oligo-, astro-, or micro-glia cells. In the hippocampal formation, expressed in dentate granule cells and hilar neurons, as well as in pyramidal cells of CA1-CA3 subfields. Expressed in stratum oriens and radiatum of all subfields. Within the thalamus, expressed moderately in the medial and lateral habenula. In the cerebellar cortex expressed in Purkinje cells and granule cells. Expressed at low levels in choroid plexus.

The protein resides in the cell membrane. It catalyses the reaction Na(+)(in) = Na(+)(out). The enzyme catalyses K(+)(in) = K(+)(out). It carries out the reaction Li(+)(in) = Li(+)(out). Its activity is regulated as follows. Inhibited by the diuretic drug amiloride. Inhibited by gadolinium ions, the heterotrimer with ASIC3 being more sensitive. Zn(2+) potentiates the acid activation of ASIC2-containing homomeric and heteromeric channels. The snake venom mambalgin-1 and mambalgin-2 inhibit the homotrimers composed of ASIC1 and ASIC2 and have strong analgesic effects. In terms of biological role, forms pH-gated trimeric sodium channels that act as postsynaptic excitatory sensors in the nervous system. Upon extracellular acidification, these channels generate rapid, transient inward currents that fully desensitize. Highly selective for sodium, they are permeable to other cations. By forming heterotrimeric channels with ASIC1, could contribute to synaptic plasticity, learning, and memory. Additionally, as acid sensors at nerve terminals, plays a role in mechanosensation and phototransduction. Its function is as follows. Has no pH-gated sodium channel activity per se but can associate with other ASICs to produce functional channels with specific properties. The polypeptide is Acid-sensing ion channel 2 (Rattus norvegicus (Rat)).